The following is a 94-amino-acid chain: DNA-directed RNA polymerase subunit omega (94 aa).

The protein belongs to the RNA polymerase subunit omega family. The RNAP catalytic core consists of 2 alpha, 1 beta, 1 beta' and 1 omega subunit. When a sigma factor is associated with the core the holoenzyme is formed, which can initiate transcription.

It catalyses the reaction RNA(n) + a ribonucleoside 5'-triphosphate = RNA(n+1) + diphosphate. Its function is as follows. Promotes RNA polymerase assembly. Latches the N- and C-terminal regions of the beta' subunit thereby facilitating its interaction with the beta and alpha subunits. The sequence is that of DNA-directed RNA polymerase subunit omega from Bifidobacterium longum subsp. infantis (strain ATCC 15697 / DSM 20088 / JCM 1222 / NCTC 11817 / S12).